Consider the following 347-residue polypeptide: Endophilin-A3 (347 aa).

The segment at 1–21 is membrane-binding amphipathic helix; that stretch reads MSVAGLKKQFHKASQLFSEKI. Residues 18–249 form the BAR domain; sequence SEKISGAEGT…LELRISLASK (232 aa). The required for dimerization upon membrane association stretch occupies residues 60–87; sequence PNPAYRAKLGMLNTVSKLRGQVKATGYP. A coiled-coil region spans residues 180–201; the sequence is EEEIRQAVEKFEESKELAERSM. Residues 218-254 form an interaction with ARC region; that stretch reads FVEAALDYHRQSTEILQELQSKLELRISLASKVPKRE. The interval 255–288 is disordered; the sequence is FMPKPVNMSSTDANGVGPSSSSKTPGTDTPADQP. The span at 261–281 shows a compositional bias: polar residues; the sequence is NMSSTDANGVGPSSSSKTPGT. One can recognise an SH3 domain in the interval 285–344; that stretch reads ADQPCCRGLYDFEPENEGELGFKEGDIITLTNQIDENWYEGMLRGESGFFPINYVEVIVP.

The protein belongs to the endophilin family. In terms of assembly, interacts with ARC, DNM1, SGIP1, SYNJ1 and DYDC1. Interacts with FASLG. Interacts with ATXN2. Interacts with BIN2.

The protein localises to the cytoplasm. The protein resides in the early endosome membrane. Implicated in endocytosis. May recruit other proteins to membranes with high curvature. This is Endophilin-A3 (Sh3gl3) from Mus musculus (Mouse).